We begin with the raw amino-acid sequence, 299 residues long: Regucalcin (299 aa).

Glutamate 18 is an a divalent metal cation binding site. The substrate site is built by arginine 101, asparagine 103, and glutamate 121. Lysine 144 carries the post-translational modification N6-succinyllysine. Positions 154 and 204 each coordinate a divalent metal cation. Aspartate 204 serves as the catalytic Proton donor/acceptor. N6-succinyllysine is present on residues lysine 244 and lysine 253.

This sequence belongs to the SMP-30/CGR1 family. In terms of assembly, monomer. The cofactor is Zn(2+). Mn(2+) serves as cofactor. Requires Ca(2+) as cofactor. Mg(2+) is required as a cofactor.

The protein resides in the cytoplasm. The enzyme catalyses D-glucono-1,5-lactone + H2O = D-gluconate + H(+). Functionally, gluconolactonase with low activity towards other sugar lactones, including gulonolactone and galactonolactone. Can also hydrolyze diisopropyl phosphorofluoridate and phenylacetate (in vitro). Calcium-binding protein. Modulates Ca(2+) signaling, and Ca(2+)-dependent cellular processes and enzyme activities. In Pongo abelii (Sumatran orangutan), this protein is Regucalcin (RGN).